A 478-amino-acid chain; its full sequence is Glycogen synthase (478 aa).

Lysine 15 contributes to the ADP-alpha-D-glucose binding site.

Belongs to the glycosyltransferase 1 family. Bacterial/plant glycogen synthase subfamily.

It catalyses the reaction [(1-&gt;4)-alpha-D-glucosyl](n) + ADP-alpha-D-glucose = [(1-&gt;4)-alpha-D-glucosyl](n+1) + ADP + H(+). The protein operates within glycan biosynthesis; glycogen biosynthesis. Its function is as follows. Synthesizes alpha-1,4-glucan chains using ADP-glucose. This is Glycogen synthase from Bacillus cytotoxicus (strain DSM 22905 / CIP 110041 / 391-98 / NVH 391-98).